The following is a 721-amino-acid chain: Polyribonucleotide nucleotidyltransferase (721 aa).

Mg(2+) contacts are provided by aspartate 490 and aspartate 496. The 62-residue stretch at 557–618 folds into the KH domain; the sequence is PRILTLKINP…EAVRQKIEGL (62 aa). The S1 motif domain maps to 625 to 693; it reads GEEYEGTVVK…DRGKIDLIRP (69 aa). Positions 696–721 are disordered; sequence EGKIAPREPRAARAGGDRGGRPPRRE.

The protein belongs to the polyribonucleotide nucleotidyltransferase family. Mg(2+) serves as cofactor.

It localises to the cytoplasm. The enzyme catalyses RNA(n+1) + phosphate = RNA(n) + a ribonucleoside 5'-diphosphate. Involved in mRNA degradation. Catalyzes the phosphorolysis of single-stranded polyribonucleotides processively in the 3'- to 5'-direction. This Deinococcus geothermalis (strain DSM 11300 / CIP 105573 / AG-3a) protein is Polyribonucleotide nucleotidyltransferase.